The chain runs to 339 residues: RNA 3'-terminal phosphate cyclase (339 aa).

ATP contacts are provided by residues Gln103 and 283 to 287; that span reads HLADQ. His308 acts as the Tele-AMP-histidine intermediate in catalysis.

It belongs to the RNA 3'-terminal cyclase family. Type 1 subfamily.

It localises to the cytoplasm. It catalyses the reaction a 3'-end 3'-phospho-ribonucleotide-RNA + ATP = a 3'-end 2',3'-cyclophospho-ribonucleotide-RNA + AMP + diphosphate. Its function is as follows. Catalyzes the conversion of 3'-phosphate to a 2',3'-cyclic phosphodiester at the end of RNA. The mechanism of action of the enzyme occurs in 3 steps: (A) adenylation of the enzyme by ATP; (B) transfer of adenylate to an RNA-N3'P to produce RNA-N3'PP5'A; (C) and attack of the adjacent 2'-hydroxyl on the 3'-phosphorus in the diester linkage to produce the cyclic end product. The biological role of this enzyme is unknown but it is likely to function in some aspects of cellular RNA processing. In Salmonella enteritidis PT4 (strain P125109), this protein is RNA 3'-terminal phosphate cyclase.